The primary structure comprises 200 residues: Inner membrane-spanning protein YciB (200 aa).

6 helical membrane passes run methionine 1–asparagine 21, isoleucine 37–alanine 57, leucine 66–tryptophan 86, leucine 103–phenylalanine 123, lysine 136–tryptophan 156, and phenylalanine 167–isoleucine 187.

Belongs to the YciB family.

It is found in the cell inner membrane. Functionally, plays a role in cell envelope biogenesis, maintenance of cell envelope integrity and membrane homeostasis. The chain is Inner membrane-spanning protein YciB from Brucella melitensis biotype 1 (strain ATCC 23456 / CCUG 17765 / NCTC 10094 / 16M).